Reading from the N-terminus, the 253-residue chain is MSHFQLEEMLRAGVHFGHLARRWCPKMKPYIFMEKNGVHIIDLQKTLVLADDALNALDAIAQTGREIMFVGTKKQAKQIIAAEATRAGMPFVCERWLGGMLTNFSTIRQSIRRMNSIERMETDGTFDMITKKERLMLAREREKLMRILGGIATMTRLPAALFIVDIKKEHIAIKEARSLGIPIFAMVDTNCDPEQVDYVIPANDDAIRSIQLMVKAVADTVVNARAMKVEQEVLAEMDAPEVDAAEDAAQSAE.

It belongs to the universal ribosomal protein uS2 family.

The chain is Small ribosomal subunit protein uS2 from Chlorobium luteolum (strain DSM 273 / BCRC 81028 / 2530) (Pelodictyon luteolum).